The following is a 433-amino-acid chain: Serine--tRNA ligase (433 aa).

235–237 (TSE) provides a ligand contact to L-serine. 266–268 (RSE) contacts ATP. Glutamate 289 provides a ligand contact to L-serine. Residue 353-356 (EISS) coordinates ATP. Serine 388 is a binding site for L-serine.

Belongs to the class-II aminoacyl-tRNA synthetase family. Type-1 seryl-tRNA synthetase subfamily. As to quaternary structure, homodimer. The tRNA molecule binds across the dimer.

Its subcellular location is the cytoplasm. The enzyme catalyses tRNA(Ser) + L-serine + ATP = L-seryl-tRNA(Ser) + AMP + diphosphate + H(+). The catalysed reaction is tRNA(Sec) + L-serine + ATP = L-seryl-tRNA(Sec) + AMP + diphosphate + H(+). Its pathway is aminoacyl-tRNA biosynthesis; selenocysteinyl-tRNA(Sec) biosynthesis; L-seryl-tRNA(Sec) from L-serine and tRNA(Sec): step 1/1. In terms of biological role, catalyzes the attachment of serine to tRNA(Ser). Is also able to aminoacylate tRNA(Sec) with serine, to form the misacylated tRNA L-seryl-tRNA(Sec), which will be further converted into selenocysteinyl-tRNA(Sec). In Burkholderia ambifaria (strain MC40-6), this protein is Serine--tRNA ligase.